Here is a 400-residue protein sequence, read N- to C-terminus: Flavo-diiron protein FprA2 (400 aa).

The tract at residues 32-216 (GTSYNAYLIK…VVKGLDILDA (185 aa)) is zinc metallo-hydrolase. The Fe cation site is built by His79, Glu81, Asp83, His147, Asp166, and His226. Residues 257-397 (IPIFYCSAYG…KAFKFGEDFA (141 aa)) form the Flavodoxin-like domain. Residues 263–267 (SAYGN) and 345–372 (AFGSFGWSGEAIPFVISRLKELKLKVFQ) contribute to the FMN site.

This sequence in the N-terminal section; belongs to the zinc metallo-hydrolase group 3 family. As to quaternary structure, homotetramer. FMN serves as cofactor. Requires Fe cation as cofactor.

The enzyme catalyses 2 NADH + O2 + 2 H(+) = 2 NAD(+) + 2 H2O. Functionally, catalyzes the four-electron reduction of molecular oxygen to water. In fact, functions as the terminal component of an NADH oxidase (NADH:O(2) oxidoreductase) when using NADH:rubredoxin oxidoreductase (NROR) and rubredoxin (Rd) as electron transport intermediaries between NADH and FDP. Is thus able to reductively scavenge intracellular dioxygen and is part of an oxidative stress defense system in C.acetobutylicum, an obligate anaerobic bacterium. Can also serve as the terminal component of an NADH:nitric oxide oxidoreductase (NOR) with a catalytic efficiency comparable to that of its NADH oxidase activity, and therefore might have an in vivo role in scavenging nitric oxide. This is Flavo-diiron protein FprA2 (fprA2) from Clostridium acetobutylicum (strain ATCC 824 / DSM 792 / JCM 1419 / IAM 19013 / LMG 5710 / NBRC 13948 / NRRL B-527 / VKM B-1787 / 2291 / W).